The chain runs to 411 residues: Ferrochelatase, mitochondrial (411 aa).

A mitochondrion-targeting transit peptide spans 1 to 41 (MAAFRAAHRLLGHILRNESSAGLVTQRWSSSAAVASVPKSS). Residues 34–55 (VASVPKSSDPKPHAQPDKRKPK) are disordered. The span at 41-51 (SDPKPHAQPDK) shows a compositional bias: basic and acidic residues. The protoporphyrin IX site is built by R102, Y110, and S117. C183 provides a ligand contact to [2Fe-2S] cluster. Active-site residues include H217 and D370. [2Fe-2S] cluster-binding residues include C390, C393, and C398.

The protein belongs to the ferrochelatase family. As to quaternary structure, homodimer. Homotetramer. It depends on [2Fe-2S] cluster as a cofactor.

It localises to the mitochondrion inner membrane. The enzyme catalyses heme b + 2 H(+) = protoporphyrin IX + Fe(2+). It participates in porphyrin-containing compound metabolism; protoheme biosynthesis; protoheme from protoporphyrin-IX: step 1/1. Functionally, catalyzes the ferrous insertion into protoporphyrin IX. This is Ferrochelatase, mitochondrial from Xenopus laevis (African clawed frog).